Consider the following 600-residue polypeptide: MCGIVGFIGEQDAKEILLKGLEKLEYRGYDSAGIAVQAENGVVVYKEKGRIAKLREIVDENVAASVGIGHTRWATHGVPSKVNAHPHQSTSKRFTLVHNGVIENYELVKKEYLQDVTFVSETDTEVIVQLMEQQVSTGLSVEEAFRNTLSLLHGSYAIGLLDAENPNMIYVAKNKSPLLVGVGDNFNVVASDAMAMLQVTDQFIELMDKEIVIVTKESITIKNLQGETIERAPFTAELDASDIEKGTYPHFMLKEIDEQPLVIRNIIQKYQDENGEIELNQDIRNAILDSDRIYIIACGTSYHAGLVGKQFIEKFAKMPVEVHVASEFSYNMPLLTERPFFIYISQSGETADSRAVLVQTNEMGHKALTITNVPGSTLSREADYTLPLYAGPEIAVASTKAYTAQLAVLSILAADIAKAKGEVLDFDLTHELGLVANAMIELCDQKEEMDALAKQFLATTRNCFFIGRSVDFYVGLEGALKLKEISYIQAEGFAGGELKHGTIALIENGTPVIALATQEHVNLGIRGNVKEVVARGANPCIISMKGLEMEGDSFVLPTVHEALAPLVAVIPLQLISYYAALHRECDVDKPRNLAKSVTVE.

Cys2 serves as the catalytic Nucleophile; for GATase activity. Residues 2–217 (CGIVGFIGEQ…DKEIVIVTKE (216 aa)) enclose the Glutamine amidotransferase type-2 domain. SIS domains follow at residues 283–422 (IRNA…AKGE) and 452–590 (LAKQ…VDKP). The active-site For Fru-6P isomerization activity is the Lys595.

As to quaternary structure, homodimer.

The protein resides in the cytoplasm. It catalyses the reaction D-fructose 6-phosphate + L-glutamine = D-glucosamine 6-phosphate + L-glutamate. In terms of biological role, catalyzes the first step in hexosamine metabolism, converting fructose-6P into glucosamine-6P using glutamine as a nitrogen source. This chain is Glutamine--fructose-6-phosphate aminotransferase [isomerizing], found in Bacillus cereus (strain ATCC 14579 / DSM 31 / CCUG 7414 / JCM 2152 / NBRC 15305 / NCIMB 9373 / NCTC 2599 / NRRL B-3711).